Reading from the N-terminus, the 185-residue chain is ATP synthase subunit b, cyanelle (185 aa).

A helical transmembrane segment spans residues 36-58 (LINLLVIFFLLIYQGRPFFTALL).

It belongs to the ATPase B chain family. As to quaternary structure, F-type ATPases have 2 components, F(1) - the catalytic core - and F(0) - the membrane proton channel. F(1) has five subunits: alpha(3), beta(3), gamma(1), delta(1), epsilon(1). F(0) has four main subunits: a(1), b(1), b'(1) and c(10-14). The alpha and beta chains form an alternating ring which encloses part of the gamma chain. F(1) is attached to F(0) by a central stalk formed by the gamma and epsilon chains, while a peripheral stalk is formed by the delta, b and b' chains.

The protein resides in the plastid. Its subcellular location is the cyanelle thylakoid membrane. In terms of biological role, f(1)F(0) ATP synthase produces ATP from ADP in the presence of a proton or sodium gradient. F-type ATPases consist of two structural domains, F(1) containing the extramembraneous catalytic core and F(0) containing the membrane proton channel, linked together by a central stalk and a peripheral stalk. During catalysis, ATP synthesis in the catalytic domain of F(1) is coupled via a rotary mechanism of the central stalk subunits to proton translocation. Its function is as follows. Component of the F(0) channel, it forms part of the peripheral stalk, linking F(1) to F(0). The polypeptide is ATP synthase subunit b, cyanelle (Cyanophora paradoxa).